Here is a 186-residue protein sequence, read N- to C-terminus: Translation initiation factor IF-3 (186 aa).

Belongs to the IF-3 family. As to quaternary structure, monomer.

The protein localises to the cytoplasm. IF-3 binds to the 30S ribosomal subunit and shifts the equilibrium between 70S ribosomes and their 50S and 30S subunits in favor of the free subunits, thus enhancing the availability of 30S subunits on which protein synthesis initiation begins. The chain is Translation initiation factor IF-3 from Chlamydia muridarum (strain MoPn / Nigg).